The following is a 299-amino-acid chain: Regucalcin (299 aa).

A divalent metal cation is bound at residue glutamate 18. Residues arginine 101, asparagine 103, and glutamate 121 each coordinate substrate. Lysine 144 carries the post-translational modification N6-succinyllysine. 2 residues coordinate a divalent metal cation: asparagine 154 and aspartate 204. The active-site Proton donor/acceptor is aspartate 204. N6-succinyllysine is present on residues lysine 244 and lysine 253.

The protein belongs to the SMP-30/CGR1 family. As to quaternary structure, monomer. It depends on Zn(2+) as a cofactor. Mn(2+) serves as cofactor. Ca(2+) is required as a cofactor. The cofactor is Mg(2+).

It is found in the cytoplasm. It catalyses the reaction D-glucono-1,5-lactone + H2O = D-gluconate + H(+). It functions in the pathway cofactor biosynthesis; L-ascorbate biosynthesis via UDP-alpha-D-glucuronate pathway; L-ascorbate from UDP-alpha-D-glucuronate: step 3/4. Functionally, gluconolactonase with low activity towards other sugar lactones, including gulonolactone and galactonolactone. Catalyzes a key step in ascorbic acid (vitamin C) biosynthesis. Can also hydrolyze diisopropyl phosphorofluoridate and phenylacetate (in vitro). Calcium-binding protein. Modulates Ca(2+) signaling, and Ca(2+)-dependent cellular processes and enzyme activities. The chain is Regucalcin (RGN) from Oryctolagus cuniculus (Rabbit).